Consider the following 78-residue polypeptide: MCGYYGNYYGGRGYGCCGCGGLGYGYGGLGCGYGSYYGCGYRGLGCGYGYGCGYGSRSLYGCGYGCGSGYGSGFGYYY.

Residues 3-76 (GYYGNYYGGR…GSGYGSGFGY (74 aa)) form a 25 X 2 AA repeats of G-[YCGS] region.

It belongs to the KRTAP type 6 family. In terms of assembly, interacts with hair keratins. As to expression, strong expression in narrowly defined pattern restricted to the lower and middle cortical regions of the hair shaft in both developing and cycling hair. During hair follicle regression (catagen), expression levels decrease until expression is no longer detectable in follicles at resting stage (telogen).

Functionally, in the hair cortex, hair keratin intermediate filaments are embedded in an interfilamentous matrix, consisting of hair keratin-associated proteins (KRTAP), which are essential for the formation of a rigid and resistant hair shaft through their extensive disulfide bond cross-linking with abundant cysteine residues of hair keratins. The matrix proteins include the high-sulfur and high-glycine-tyrosine keratins. The chain is Keratin-associated protein 6-5 (Krtap6-5) from Mus musculus (Mouse).